Reading from the N-terminus, the 418-residue chain is Hepatic and glial cell adhesion molecule (418 aa).

Residues 1 to 33 (MKRERGALSRASRALRLSPFVYLLLIQPVPLEG) form the signal peptide. Positions 34-142 (VNITSPVRLI…GEKTINLTVD (109 aa)) constitute an Ig-like V-type domain. Residues 34 to 240 (VNITSPVRLI…VKITVYRRSS (207 aa)) lie on the Extracellular side of the membrane. N-linked (GlcNAc...) asparagine glycosylation is found at asparagine 35, asparagine 138, asparagine 167, and asparagine 189. Positions 148-234 (PQVLVASTTV…QVRSLPVKIT (87 aa)) constitute an Ig-like C2-type domain. A disulfide bond links cysteine 168 and cysteine 217. The helical transmembrane segment at 241 to 261 (LYIILSTGGIFLLVTLVTVCA) threads the bilayer. Over 262 to 418 (CWKPSKKSRK…DESGQVEISA (157 aa)) the chain is Cytoplasmic. The segment at 271–418 (KKRKLEKQNS…DESGQVEISA (148 aa)) is disordered. Serine 280 is subject to Phosphoserine. The span at 287 to 308 (NDDRLKSEADTLPRSGEQERKN) shows a compositional bias: basic and acidic residues. 3 positions are modified to phosphoserine: serine 321, serine 352, and serine 379. A compositionally biased stretch (low complexity) spans 341–358 (GYSVSPPVPGRSPGLPIR). Residues 385-396 (SSPGRSRSSSRS) are compositionally biased toward low complexity.

In terms of assembly, homodimer. Dimer formation occurs predominantly through cis interactions on the cell surface. Part of a complex containing MLC1, TRPV4, AQP4 and ATP1B1. Interacts with CLCN2. N-glycosylated.

The protein resides in the cytoplasm. Its subcellular location is the cell membrane. In terms of biological role, involved in regulating cell motility and cell-matrix interactions. May inhibit cell growth through suppression of cell proliferation. In glia, associates and targets CLCN2 at astrocytic processes and myelinated fiber tracts where it may regulate transcellular chloride flux involved in neuron excitability. The sequence is that of Hepatic and glial cell adhesion molecule from Mus musculus (Mouse).